The sequence spans 492 residues: Regulatory protein ViaA (492 aa).

The protein belongs to the ViaA family. As to quaternary structure, homodimer. Interacts with RavA.

The protein localises to the cytoplasm. Its function is as follows. Component of the RavA-ViaA chaperone complex, which may act on the membrane to optimize the function of some of the respiratory chains. ViaA stimulates the ATPase activity of RavA. This is Regulatory protein ViaA from Pectobacterium carotovorum subsp. carotovorum (strain PC1).